The chain runs to 407 residues: GTPase Obg (407 aa).

Residues 1–159 form the Obg domain; it reads MKFVDEVSIR…RDLKLEMKVL (159 aa). Residues 128–148 are disordered; the sequence is TRFKSSTNRAPRQTTPGKPGE. Over residues 129-143 the composition is skewed to polar residues; sequence RFKSSTNRAPRQTTP. The 174-residue stretch at 160 to 333 folds into the OBG-type G domain; sequence ADVGLLGLPN…LTRDIMRYLE (174 aa). GTP-binding positions include 166–173, 191–195, 213–216, 283–286, and 314–316; these read GLPNAGKS, FTTLV, DIPG, NKCD, and SAI. Mg(2+) contacts are provided by Ser-173 and Thr-193. Positions 376–407 are disordered; that stretch reads SGVKSVHDIGDDDWDEEDVDDEDGPEIIYVRD. The segment covering 385-400 has biased composition (acidic residues); that stretch reads GDDDWDEEDVDDEDGP.

The protein belongs to the TRAFAC class OBG-HflX-like GTPase superfamily. OBG GTPase family. Monomer. The cofactor is Mg(2+).

It is found in the cytoplasm. An essential GTPase which binds GTP, GDP and possibly (p)ppGpp with moderate affinity, with high nucleotide exchange rates and a fairly low GTP hydrolysis rate. Plays a role in control of the cell cycle, stress response, ribosome biogenesis and in those bacteria that undergo differentiation, in morphogenesis control. The polypeptide is GTPase Obg (Pseudomonas fluorescens (strain Pf0-1)).